A 115-amino-acid chain; its full sequence is Variant surface glycoprotein ANTAT 1.8 (115 aa).

An N-linked (GlcNAc...) asparagine glycan is attached at N42. Residue D92 is the site of GPI-anchor amidated aspartate attachment. Positions 93 to 115 are cleaved as a propeptide — removed in mature form; the sequence is SSILVNKQLALSVVSAAFAALLF.

The protein localises to the cell membrane. In terms of biological role, VSG forms a coat on the surface of the parasite. The trypanosome evades the immune response of the host by expressing a series of antigenically distinct VSGs from an estimated 1000 VSG genes. The protein is Variant surface glycoprotein ANTAT 1.8 of Trypanosoma brucei brucei.